The following is a 576-amino-acid chain: MNVLLKRRSLTFAPRWLWCKCRSSRSRPYSLAHAVDTSKMEATRRNGQIVKDLGRYYPSMSESALHDLCQEYKEVTIADFNERFLGNPATLHHEDNPNLLLSINGRIKSIRFSGQKIVFIDLYNGSSGLKNDTQLQLIVNYNKIGGSSEDKANFSEYMNFLKKGDYIKALGYPGFSQSRVKMLSLICNKLPIVLSVSQLPLPSRLNDETKIKSNRVVDYQLNGTQTLLVRARIIKLLRKFLDDRNFVEVETPILSSKSNGAMAKPFITSSKDFDHLELRIAPELWLKRLIISGLQKVYEIGKVFRNEGIDSTHNAEFSTLEFYETYMSMDDIVTRTEDLFKFLITNLQKFFQDTRLPVPKTFSELHLALSENNWKFRKVEFLPTLNKELGIDLMNSGLDINKPSELLKALPKDIAKKYFPSADNTGQLSSLQILNKLSDVFLEQRHCQSTLPTVIYHQPAILSPLAKTDPQNKQVTKRFEVFIKGKEYINAYEEENCPQLQLQKFLQQKQINELTGNKTETLSPVIDYQYVETMKYGMPPVGGFGLGIDRLCMLFCDKKRIEEVLPFGCVDDVNRQ.

The transit peptide at 1–30 directs the protein to the mitochondrion; that stretch reads MNVLLKRRSLTFAPRWLWCKCRSSRSRPYS.

Belongs to the class-II aminoacyl-tRNA synthetase family.

The protein localises to the mitochondrion matrix. The catalysed reaction is tRNA(Lys) + L-lysine + ATP = L-lysyl-tRNA(Lys) + AMP + diphosphate. Its function is as follows. Catalyzes the attachment of lysine to tRNA(Lys) in the mitochondrion. This is Lysine--tRNA ligase, mitochondrial (MSK1) from Saccharomyces cerevisiae (strain ATCC 204508 / S288c) (Baker's yeast).